The chain runs to 190 residues: Dynein axonemal light chain 1 (190 aa).

Ala-2 bears the N-acetylalanine mark. 4 LRR repeats span residues 49–70, 71–92, 94–115, and 116–137; these read NCEK…NGLK, NLRI…EAVG, TLEE…HVMK, and KLKI…LKLA. Ser-56 carries the phosphoserine modification. Residues 150–190 enclose the LRRCT domain; sequence NPLEEKHSAEGNWIDEATKRVPKLKKLDGTPVIKEDEEEES.

The protein belongs to the dynein light chain LC1-type family. Interacts with ZMYND10 (via C-terminus). Interacts with DNAH5, a outer arm dynein heavy chain. Interacts with tubulin located within the A-tubule of the outer doublets in a ATP-independent manner. As to expression, expressed in the respiratory epithelium of the upper airways and the ependymal cells lining the brain ventricles.

The protein localises to the cytoplasm. It localises to the cytoskeleton. It is found in the cilium axoneme. Functionally, part of the multisubunit axonemal ATPase complexes that generate the force for cilia motility and govern beat frequency. Component of the outer arm dynein (ODA). May be involved in a mechanosensory feedback mechanism controlling ODA activity based on external conformational cues by tethering the outer arm dynein heavy chain (DNAH5) to the microtubule within the axoneme. Important for ciliary function in the airways and for the function of the cilia that produce the nodal flow essential for the determination of the left-right asymmetry. The polypeptide is Dynein axonemal light chain 1 (Dnal1) (Mus musculus (Mouse)).